The primary structure comprises 506 residues: MAAMMASITSELLFFLPFILLALLTFYTTTVAKCHGGHWWRGGTTPAKRKRMNLPPGAAGWPLVGETFGYLRAHPATSVGRFMEQHIARYGKIYRSSLFGERTVVSADAGLNRYILQNEGRLFECSYPRSIGGILGKWSMLVLVGDPHREMRAISLNFLSSVRLRAVLLPEVERHTLLVLRAWLPSSTFSAQHQAKKFTFNLMAKNIMSMDPGEEETERLRREYITFMKGVVSAPLNLPGTPYWKALKSRAAILGVIERKMEERVEKLSKEDASVEQDDLLGWALKQSNLSKEQILDLLLSLLFAGHETSSMALALAIFFLEGCPKAVQELREEHLGIARRQRLRGECKLSWEDYKEMVFTQCVINETLRLGNVVRFLHRKVIKDVHYKGYDIPSGWKILPVLAAVHLDSSLYEDPQRFNPWRWKSSGSSGGLAQSSSFMPYGGGTRLCAGSELAKLEMAVFLHHLVLNFRWELAEPDQAFVFPFVDFPKGLPIRVHRIAQDDEQE.

Residues 12-32 (LLFFLPFILLALLTFYTTTVA) traverse the membrane as a helical segment. C449 lines the heme pocket.

The protein belongs to the cytochrome P450 family. Heme is required as a cofactor.

Its subcellular location is the membrane. The catalysed reaction is a C28-steroid + reduced [NADPH--hemoprotein reductase] + O2 = a (22S)-22-hydroxy C28-steroid + oxidized [NADPH--hemoprotein reductase] + H2O + H(+). It catalyses the reaction campesterol + reduced [NADPH--hemoprotein reductase] + O2 = (22S)-22-hydroxycampesterol + oxidized [NADPH--hemoprotein reductase] + H2O + H(+). The enzyme catalyses campestanol + reduced [NADPH--hemoprotein reductase] + O2 = 6-deoxycathasterone + oxidized [NADPH--hemoprotein reductase] + H2O + H(+). Its pathway is plant hormone biosynthesis; brassinosteroid biosynthesis. In terms of biological role, catalyzes the C22-alpha-hydroxylation step in brassinosteroid biosynthesis, which is the rate-limiting step in this biosynthetic pathway. Catalyzes the conversion of campesterol (CR) to (22S)-22-hydroxycampesterol (22-OHCR, 22-hydroxyCR) and of campestanol (CN) to 6-deoxocathasterone (6-deoxoCT). The chain is Steroid (22S)-hydroxylase from Oryza sativa subsp. indica (Rice).